The chain runs to 203 residues: A-type ATP synthase subunit E (203 aa).

It belongs to the V-ATPase E subunit family. As to quaternary structure, has multiple subunits with at least A(3), B(3), C, D, E, F, H, I and proteolipid K(x).

It is found in the cell membrane. In terms of biological role, component of the A-type ATP synthase that produces ATP from ADP in the presence of a proton gradient across the membrane. The chain is A-type ATP synthase subunit E from Thermococcus onnurineus (strain NA1).